Reading from the N-terminus, the 243-residue chain is Terpene cyclase dpmpB (243 aa).

Helical transmembrane passes span 13-33 (FLEVAWLADACKLLMGVGWTA), 51-71 (ALMPLCCNFAWELVYALILPF), 78-98 (WVHVTGLAFNCGVMYTAIKFA), 112-132 (LTWIFIASVAGWMSAHLALAA), 141-161 (AWSAYGCQLLLSVGGLCQLLC), 169-189 (SYLLWFSRFFGSLVLIPQDIL), and 207-227 (LWFVSIFLILDGSYGILLWYV).

It belongs to the paxB family.

The protein localises to the membrane. The protein operates within secondary metabolite biosynthesis; terpenoid biosynthesis. Terpene cyclase; part of the gene cluster that mediates the biosynthesis of diterpenoid pyrones. The first step of the pathway is the synthesis of the alpha-pyrone moiety by the polyketide synthase dpmpA via condensation of one acetyl-CoA starter unit with 3 malonyl-CoA units and 2 methylations. The alpha-pyrone is then combined with geranylgeranyl pyrophosphate (GGPP) formed by the GGPP synthase dpmpD through the action of the prenyltransferase dpmpC to yield a linear alpha-pyrone diterpenoid. Subsequent steps in the diterpenoid pyrone biosynthetic pathway involve the decalin core formation, which is initiated by the epoxidation of the C10-C11 olefin by the FAD-dependent oxidoreductase dpmpE, and is followed by a cyclization cascade catalyzed by the terpene cyclase dpmpB. The short chain dehydrogenase/reductase dpmpG then oxidizes the 8S hydroxy group to a ketone and the short chain dehydrogenase/reductase dpmpH reduces the ketone to the 8R hydroxy group to yield higginsianin B. Higginsianin B is further methylated by the methyltransferase dpmpI to produce the intermediate named FDDP B. The cytochrome P450 monooxygenase dpmpJ then oxidizes the C-26 methyl to primary alcohol, producing the final diterpenoid pyrone with a C-26 primary alcohol on the gamma-pyrone moiety named FDDP C. The protein is Terpene cyclase dpmpB of Macrophomina phaseolina (strain MS6) (Charcoal rot fungus).